Here is a 414-residue protein sequence, read N- to C-terminus: Tryptophan synthase beta chain (414 aa).

A disordered region spans residues 1–26 (MVSTFSRKNQNYKKDDLNQPSKDGRF). The segment covering 12–26 (YKKDDLNQPSKDGRF) has biased composition (basic and acidic residues). Position 109 is an N6-(pyridoxal phosphate)lysine (Lys109).

Belongs to the TrpB family. As to quaternary structure, tetramer of two alpha and two beta chains. It depends on pyridoxal 5'-phosphate as a cofactor.

The enzyme catalyses (1S,2R)-1-C-(indol-3-yl)glycerol 3-phosphate + L-serine = D-glyceraldehyde 3-phosphate + L-tryptophan + H2O. It participates in amino-acid biosynthesis; L-tryptophan biosynthesis; L-tryptophan from chorismate: step 5/5. The beta subunit is responsible for the synthesis of L-tryptophan from indole and L-serine. In Prochlorococcus marinus (strain MIT 9215), this protein is Tryptophan synthase beta chain.